We begin with the raw amino-acid sequence, 224 residues long: NBPF family member NBPF6-like protein (224 aa).

The 66-residue stretch at 159 to 224 folds into the Olduvai domain; it reads ENHHDRKDEE…ASVCDVQDQL (66 aa). The segment covering 198–209 has biased composition (basic and acidic residues); that stretch reads YLTHSSHHDSHR. Positions 198–224 are disordered; that stretch reads YLTHSSHHDSHRPPSSIASVCDVQDQL.

Belongs to the NBPF family.

The chain is NBPF family member NBPF6-like protein from Bos taurus (Bovine).